The following is a 40-amino-acid chain: 67 kDa serum albumin (40 aa).

Positions 1–40 (DAEHKSEIVHRFNDLKEEKFKGAALITFAQFLHKKPEEEA) constitute an Albumin domain. H4 serves as a coordination point for Cu cation.

It belongs to the ALB/AFP/VDB family. As to expression, plasma.

It localises to the secreted. Its function is as follows. Serum albumin, the main protein of plasma, has a good binding capacity for water, Ca(2+), Na(+), K(+), fatty acids, hormones, bilirubin and drugs. Its main function is the regulation of the colloidal osmotic pressure of blood. The protein is 67 kDa serum albumin of Trachemys scripta (Red-eared slider turtle).